The sequence spans 303 residues: uncharacterized protein (303 aa).

The next 4 helical transmembrane spans lie at 55–77 (FLVKVAVLCMFISMTLASFLFIQ), 92–111 (PAVFSIFTVICIFMTYTKII), 208–230 (FSLPHYMSLMFCGSIIVVYATSL), and 240–257 (IPHIFIFLLLIIFLKILI).

It localises to the cell membrane. This is an uncharacterized protein from Bacillus subtilis (strain 168).